The following is a 403-amino-acid chain: S-adenosylmethionine synthase (403 aa).

An ATP-binding site is contributed by His-17. Asp-19 contacts Mg(2+). A K(+)-binding site is contributed by Glu-45. L-methionine-binding residues include Glu-58 and Gln-104. A flexible loop region spans residues 104-114 (QSPDIAQGVDT). ATP contacts are provided by residues 179 to 181 (DGK), 250 to 251 (KF), Asp-259, 265 to 266 (RK), Ala-282, and Lys-286. L-methionine is bound at residue Asp-259. Lys-290 lines the L-methionine pocket.

Belongs to the AdoMet synthase family. As to quaternary structure, homotetramer; dimer of dimers. It depends on Mg(2+) as a cofactor. The cofactor is K(+).

Its subcellular location is the cytoplasm. The enzyme catalyses L-methionine + ATP + H2O = S-adenosyl-L-methionine + phosphate + diphosphate. The protein operates within amino-acid biosynthesis; S-adenosyl-L-methionine biosynthesis; S-adenosyl-L-methionine from L-methionine: step 1/1. Catalyzes the formation of S-adenosylmethionine (AdoMet) from methionine and ATP. The overall synthetic reaction is composed of two sequential steps, AdoMet formation and the subsequent tripolyphosphate hydrolysis which occurs prior to release of AdoMet from the enzyme. The polypeptide is S-adenosylmethionine synthase (Mycobacterium tuberculosis (strain ATCC 25177 / H37Ra)).